Here is a 248-residue protein sequence, read N- to C-terminus: NLP effector protein Pc121494 (248 aa).

Positions 1–19 (MKFIAVLIAAIASLSAVQA) are cleaved as a signal peptide. The Hepta-peptide GHRHDWE motif signature appears at 124-130 (GHRNGWE). Asparagine 143 carries an N-linked (GlcNAc...) asparagine glycan.

The protein belongs to the Necrosis inducing protein (NPP1) family.

Its subcellular location is the secreted. In terms of biological role, secreted effector that contributes strongly to virulence during infection by P.capsici. In Phytophthora capsici, this protein is NLP effector protein Pc121494.